We begin with the raw amino-acid sequence, 178 residues long: Vegetative protein (178 aa).

Disordered regions lie at residues 67 to 102 (AGRR…AAAG) and 138 to 158 (NRRP…DIKL). The segment covering 76-90 (PAARSAVTAAPAAVG) has biased composition (low complexity).

The chain is Vegetative protein (vegA) from Myxococcus xanthus.